The sequence spans 90 residues: Probable Fe(2+)-trafficking protein (90 aa).

It belongs to the Fe(2+)-trafficking protein family. Monomer.

Could be a mediator in iron transactions between iron acquisition and iron-requiring processes, such as synthesis and/or repair of Fe-S clusters in biosynthetic enzymes. This is Probable Fe(2+)-trafficking protein from Edwardsiella ictaluri (strain 93-146).